The primary structure comprises 335 residues: Leukocyte immunoglobulin-like receptor subfamily B member 4A (335 aa).

The N-terminal stretch at 1-23 is a signal peptide; sequence MIAMLTVLLYLGLILEPRTAVQA. At 24 to 238 the chain is on the extracellular side; sequence GHLPKPIIWA…TEDGLETYQK (215 aa). Ig-like C2-type domains lie at 42 to 125 and 124 to 212; these read YTSV…ENPS and PSLS…KPSN. Cys49 and Cys98 are oxidised to a cystine. N-linked (GlcNAc...) asparagine glycosylation is found at Asn133 and Asn191. Cys144 and Cys196 are joined by a disulfide. The chain crosses the membrane as a helical span at residues 239–260; the sequence is ILIGVLVSFLLLFFLLLFLILI. Topologically, residues 261–335 are cytoplasmic; it reads GYQYGHKKKA…CIRTQEQNNS (75 aa). 2 short sequence motifs (ITIM motif) span residues 298 to 303 and 320 to 325; these read IVYAQV and VTYAQL.

As to quaternary structure, interacts (when tyrosine phosphorylated) with SH2 domain-containing phosphatases PTPN6/SHP-1 and PTPN11/SHP-2; interaction with PTPN6 enhances inhibition of mast cell activation. In terms of processing, tyrosine phosphorylated. In terms of tissue distribution, expressed on mast cells and natural killer cells (at protein level). Expressed on neutrophils (at protein level). Expressed on eosinophils (at protein level). Expressed on dendritic cells (at protein level). Expressed on memory and marginal zone B cells (at protein level). Expressed on CD8 T cells (at protein level). Expressed in the uterus of pregnant mice where it is detected at day 4.0 of pregnancy with levels dropping at day 4.5. Highly expressed in the luminal epithelium of uterine endometrium with lower levels in the glandular epithelium.

Its subcellular location is the cell membrane. In terms of biological role, inhibitory receptor involved in the down-regulation of the immune response. Receptor for FN1. Receptor for integrin ITGAV/ITGB3. Inhibits IgE-mediated mast cell activation, at least in part through interaction with ITGAV/ITGB3. Also inhibits KITLG/SCF-mediated mast cell activation. Through interaction with ITGAV/ITGB3, inhibits antibody production by memory and marginal zone B cells, probably by suppressing their differentiation into plasma cells. Inhibits IFNG production by CD8 T cells, CD4 T cells and natural killer cells. Inhibits antigen presentation by dendritic cells to T cells, preventing T cell activation. Inhibits lipopolysaccharide-mediated neutrophil-dependent vascular injury. Suppresses the allergic inflammatory response by inhibiting infiltration of neutrophils and eosinophils and preventing mast cell degranulation. Inhibits lysis by natural killer cells. This chain is Leukocyte immunoglobulin-like receptor subfamily B member 4A, found in Mus musculus (Mouse).